The primary structure comprises 623 residues: Chaperone protein HtpG (623 aa).

The segment at 1 to 341 (MEKREFKAES…SQDLSLNISR (341 aa)) is a; substrate-binding. Residues 342 to 549 (EMLQHDRQLS…EGEVSIEMEK (208 aa)) form a b region. The tract at residues 550-623 (ILSAMPNNQG…FTNDICKLMK (74 aa)) is c.

The protein belongs to the heat shock protein 90 family. In terms of assembly, homodimer.

It localises to the cytoplasm. In terms of biological role, molecular chaperone. Has ATPase activity. The sequence is that of Chaperone protein HtpG from Clostridium perfringens (strain ATCC 13124 / DSM 756 / JCM 1290 / NCIMB 6125 / NCTC 8237 / Type A).